A 386-amino-acid chain; its full sequence is MNIHEYQGKAVLRSYGVSVPNGKVAFTVEEAVEAAKELGTDVCVVKAQIHAGGRGKAGGVKVAKNLDEVRTYAESILGTTLVTHQTGPEGKEVKRLLIEEGCDIKKEYYVGLVLDRATSQVVLMASEEGGTEIEEVAEKTPEKIFKEYIDPAVGLQGFQARRIAFNINIPKELVGQAVKFMMGLYRAFIEKDCSIAEINPLVTTGDGKVMALDAKLNFDSNALYRHKDILELRDLDEEDAKEIEASKYDLNYIPLDGNIGCMVNGAGLAMATMDIIKHYHGDPANFLDVGGGATAEKVTEAFKIILSDKNVKGIFVNIFGGIMKCDVIAEGVIEATKQVGLELPLVVRLEGTNVELGKKILNESGLNIVAAESMTDGAQKIVSLVG.

Positions 9–244 (KAVLRSYGVS…LDEEDAKEIE (236 aa)) constitute an ATP-grasp domain. Residues Lys46, 53–55 (GRG), Glu99, Cys102, and Glu107 each bind ATP. Mg(2+) is bound by residues Asn199 and Asp213. Substrate-binding positions include Asn264 and 321 to 323 (GIM).

This sequence belongs to the succinate/malate CoA ligase beta subunit family. As to quaternary structure, heterotetramer of two alpha and two beta subunits. Mg(2+) is required as a cofactor.

It catalyses the reaction succinate + ATP + CoA = succinyl-CoA + ADP + phosphate. The catalysed reaction is GTP + succinate + CoA = succinyl-CoA + GDP + phosphate. It functions in the pathway carbohydrate metabolism; tricarboxylic acid cycle; succinate from succinyl-CoA (ligase route): step 1/1. Its function is as follows. Succinyl-CoA synthetase functions in the citric acid cycle (TCA), coupling the hydrolysis of succinyl-CoA to the synthesis of either ATP or GTP and thus represents the only step of substrate-level phosphorylation in the TCA. The beta subunit provides nucleotide specificity of the enzyme and binds the substrate succinate, while the binding sites for coenzyme A and phosphate are found in the alpha subunit. The protein is Succinate--CoA ligase [ADP-forming] subunit beta of Bacillus anthracis (strain A0248).